We begin with the raw amino-acid sequence, 123 residues long: Large ribosomal subunit protein bL12 (123 aa).

It belongs to the bacterial ribosomal protein bL12 family. As to quaternary structure, homodimer. Part of the ribosomal stalk of the 50S ribosomal subunit. Forms a multimeric L10(L12)X complex, where L10 forms an elongated spine to which 2 to 4 L12 dimers bind in a sequential fashion. Binds GTP-bound translation factors.

Forms part of the ribosomal stalk which helps the ribosome interact with GTP-bound translation factors. Is thus essential for accurate translation. This is Large ribosomal subunit protein bL12 from Bartonella tribocorum (strain CIP 105476 / IBS 506).